A 397-amino-acid polypeptide reads, in one-letter code: RNA polymerase II elongation factor ELL3 (397 aa).

Disordered regions lie at residues Val-164–Val-219 and Val-237–Ile-284. Over residues Leu-168–Gly-178 the composition is skewed to polar residues. Acidic residues predominate over residues Gln-250–Met-262. A compositionally biased stretch (low complexity) spans Ser-269–Pro-281. Positions Pro-285–Arg-395 constitute an OCEL domain.

This sequence belongs to the ELL/occludin family. In terms of assembly, interacts with AFF4. Component of the super elongation complex (SEC), at least composed of EAF1, EAF2, CDK9, MLLT3/AF9, AFF (AFF1 or AFF4), the P-TEFb complex and ELL (ELL, ELL2 or ELL3). Component of the little elongation complex (LEC), at least composed of ELL (ELL, ELL2 or ELL3), ZC3H8, ICE1 and ICE2. As to expression, testis specific.

The protein resides in the nucleus. Enhancer-binding elongation factor that specifically binds enhancers in embryonic stem cells (ES cells), marks them, and is required for their future activation during stem cell specification. Does not only bind to enhancer regions of active genes, but also marks the enhancers that are in a poised or inactive state in ES cells and is required for establishing proper RNA polymerase II occupancy at developmentally regulated genes in a cohesin-dependent manner. Probably required for priming developmentally regulated genes for later recruitment of the super elongation complex (SEC), for transcriptional activation during differentiation. Required for recruitment of P-TEFb within SEC during differentiation. Probably preloaded on germ cell chromatin, suggesting that it may prime gene activation by marking enhancers as early as in the germ cells. Promoting epithelial-mesenchymal transition (EMT). Elongation factor component of the super elongation complex (SEC), a complex required to increase the catalytic rate of RNA polymerase II transcription by suppressing transient pausing by the polymerase at multiple sites along the DNA. Component of the little elongation complex (LEC), a complex required to regulate small nuclear RNA (snRNA) gene transcription by RNA polymerase II and III. This is RNA polymerase II elongation factor ELL3 (ELL3) from Homo sapiens (Human).